The following is a 320-amino-acid chain: Protease HtpX homolog (320 aa).

Transmembrane regions (helical) follow at residues 6-26 and 28-48; these read TAMLLAFMTALFMFVGFLIGG and AGMMIAFVIAAGMNFFSYWNS. H130 serves as a coordination point for Zn(2+). Residue E131 is part of the active site. Position 134 (H134) interacts with Zn(2+). The next 2 membrane-spanning stretches (helical) occupy residues 145-165 and 173-193; these read ITATLAGAISMLGNFAFFFGG and PLGFVGVLVAMIVAPLAAMLV. Residue E202 participates in Zn(2+) binding. The segment at 281–320 is disordered; sequence GGMNVSTPPVRAANPSRKSRSVPDTGLGRGGSQPPKGPWS.

It belongs to the peptidase M48B family. Zn(2+) is required as a cofactor.

It is found in the cell inner membrane. The protein is Protease HtpX homolog of Rhizobium leguminosarum bv. trifolii (strain WSM2304).